The sequence spans 20 residues: Citrate synthase (20 aa).

The protein belongs to the citrate synthase family. In terms of assembly, homohexamer.

It carries out the reaction oxaloacetate + acetyl-CoA + H2O = citrate + CoA + H(+). The protein operates within carbohydrate metabolism; tricarboxylic acid cycle; isocitrate from oxaloacetate: step 1/2. With respect to regulation, allosterically inhibited by NADH. The polypeptide is Citrate synthase (gltA) (Streptomyces hygroscopicus).